A 147-amino-acid chain; its full sequence is Hemoglobin subunit beta (147 aa).

Valine 2 carries the post-translational modification N-acetylvaline. The 145-residue stretch at 3-147 (HLSAEEKGLV…VATALAHKYH (145 aa)) folds into the Globin domain. At threonine 13 the chain carries Phosphothreonine. A Phosphoserine modification is found at serine 45. Position 60 is an N6-acetyllysine (lysine 60). Histidine 64 lines the heme b pocket. Lysine 83 is modified (N6-acetyllysine). Histidine 93 is a heme b binding site. Cysteine 94 bears the S-nitrosocysteine mark. The residue at position 145 (lysine 145) is an N6-acetyllysine.

Belongs to the globin family. As to quaternary structure, heterotetramer of two alpha chains and two beta chains. As to expression, red blood cells.

Functionally, involved in oxygen transport from the lung to the various peripheral tissues. The polypeptide is Hemoglobin subunit beta (HBB) (Scapanus orarius (Coast mole)).